We begin with the raw amino-acid sequence, 119 residues long: UPF0102 protein Athe_0977 (119 aa).

It belongs to the UPF0102 family.

This chain is UPF0102 protein Athe_0977, found in Caldicellulosiruptor bescii (strain ATCC BAA-1888 / DSM 6725 / KCTC 15123 / Z-1320) (Anaerocellum thermophilum).